Reading from the N-terminus, the 492-residue chain is MTENKGTPEVGWSFDTRYTDLPSMMFSNVEPEPVEAPKLVILNDSLAQSLGLDPVALQHQNSIAVLAGNEVPKGAAPLAQAYAGHQFGHFTMLGDGRAILLGEQITPNGERFDIQLKGSGRTPYSRQGDGRAALGPMLREYIISEAMHALGIPTTRSLAVVTTGESVFRETVLPGAILTRVAASHIRVGTFQFVANAGSEEELKALADYTLARHFPEVEADRENRYLALLQKVIKRQAELIAKWQLVGFIHGVMNTDNMTISGETIDYGPCAFMDVYDPETVFSSIDTRGRYAYGNQPRIGAWNLARFAEALLPLLADDQDEAIKLAEAEISNYAEQFEHHWLNGMRAKLGLFNEESEDLSLIKDLLEVMHKHKADFTNTFRALTFDEQEETGLHDKLEFTEWHERWQARLGRQEQTKDDSHNLMKMSNPAVIPRNHRVEEALEAAVEQEDYQVMERLLKVLANPFAHSPEQKAYAKLPAPCAIPYRTYCGT.

Gly-94, Gly-96, Arg-97, Lys-117, Asp-129, Gly-130, Arg-180, and Arg-187 together coordinate ATP. Asp-257 functions as the Proton acceptor in the catalytic mechanism. Mg(2+) contacts are provided by Asn-258 and Asp-267. Position 267 (Asp-267) interacts with ATP.

The protein belongs to the SELO family. Requires Mg(2+) as cofactor. Mn(2+) is required as a cofactor.

The catalysed reaction is L-seryl-[protein] + ATP = 3-O-(5'-adenylyl)-L-seryl-[protein] + diphosphate. It catalyses the reaction L-threonyl-[protein] + ATP = 3-O-(5'-adenylyl)-L-threonyl-[protein] + diphosphate. The enzyme catalyses L-tyrosyl-[protein] + ATP = O-(5'-adenylyl)-L-tyrosyl-[protein] + diphosphate. It carries out the reaction L-histidyl-[protein] + UTP = N(tele)-(5'-uridylyl)-L-histidyl-[protein] + diphosphate. The catalysed reaction is L-seryl-[protein] + UTP = O-(5'-uridylyl)-L-seryl-[protein] + diphosphate. It catalyses the reaction L-tyrosyl-[protein] + UTP = O-(5'-uridylyl)-L-tyrosyl-[protein] + diphosphate. Functionally, nucleotidyltransferase involved in the post-translational modification of proteins. It can catalyze the addition of adenosine monophosphate (AMP) or uridine monophosphate (UMP) to a protein, resulting in modifications known as AMPylation and UMPylation. This is Protein nucleotidyltransferase YdiU from Halalkalibacterium halodurans (strain ATCC BAA-125 / DSM 18197 / FERM 7344 / JCM 9153 / C-125) (Bacillus halodurans).